An 80-amino-acid polypeptide reads, in one-letter code: Large ribosomal subunit protein uL24 (80 aa).

Belongs to the universal ribosomal protein uL24 family. In terms of assembly, part of the 50S ribosomal subunit.

Functionally, one of two assembly initiator proteins, it binds directly to the 5'-end of the 23S rRNA, where it nucleates assembly of the 50S subunit. One of the proteins that surrounds the polypeptide exit tunnel on the outside of the subunit. The polypeptide is Large ribosomal subunit protein uL24 (Prosthecochloris aestuarii (strain DSM 271 / SK 413)).